The chain runs to 340 residues: N-acetyl-gamma-glutamyl-phosphate reductase (340 aa).

Residue cysteine 149 is part of the active site.

This sequence belongs to the NAGSA dehydrogenase family. Type 1 subfamily.

Its subcellular location is the cytoplasm. It carries out the reaction N-acetyl-L-glutamate 5-semialdehyde + phosphate + NADP(+) = N-acetyl-L-glutamyl 5-phosphate + NADPH + H(+). The protein operates within amino-acid biosynthesis; L-arginine biosynthesis; N(2)-acetyl-L-ornithine from L-glutamate: step 3/4. Catalyzes the NADPH-dependent reduction of N-acetyl-5-glutamyl phosphate to yield N-acetyl-L-glutamate 5-semialdehyde. The protein is N-acetyl-gamma-glutamyl-phosphate reductase of Ruthia magnifica subsp. Calyptogena magnifica.